The sequence spans 142 residues: Large ribosomal subunit protein uL22c (142 aa).

This sequence belongs to the universal ribosomal protein uL22 family. Part of the 50S ribosomal subunit.

It is found in the plastid. The protein resides in the chloroplast. In terms of biological role, this protein binds specifically to 23S rRNA. The globular domain of the protein is located near the polypeptide exit tunnel on the outside of the subunit, while an extended beta-hairpin is found that lines the wall of the exit tunnel in the center of the 70S ribosome. This Carica papaya (Papaya) protein is Large ribosomal subunit protein uL22c (rpl22).